Consider the following 388-residue polypeptide: Pepsin A-2/A-3 (388 aa).

The N-terminal stretch at 1–15 (MKWLLLLGLVALSEC) is a signal peptide. Propeptides (activation peptide) lie at residues 16-40 (IIHKVPLVRKKSLRRNLSEHGLLKD) and 41-62 (FLKKHNFNPASKYFPQAEAPTL). Residues 76 to 385 (YFGTIGIGTP…DRANNQVGLA (310 aa)) enclose the Peptidase A1 domain. The active site involves Asp-94. An intrachain disulfide couples Cys-107 to Cys-112. Phosphoserine is present on Ser-130. Cys-268 and Cys-272 are joined by a disulfide. Residue Asp-277 is part of the active site. Cys-311 and Cys-344 are joined by a disulfide.

Belongs to the peptidase A1 family. Pepsin A-2 is phosphorylated, but not pepsin A-3. In terms of processing, each pepsinogen is converted to corresponding pepsin at pH 2.0 in part as a result of the release of a 47 AA activation segment and in part as a result of stepwise proteolytic cleavage via an intermediate form(s).

The protein localises to the secreted. The enzyme catalyses Preferential cleavage: hydrophobic, preferably aromatic, residues in P1 and P1' positions. Cleaves 1-Phe-|-Val-2, 4-Gln-|-His-5, 13-Glu-|-Ala-14, 14-Ala-|-Leu-15, 15-Leu-|-Tyr-16, 16-Tyr-|-Leu-17, 23-Gly-|-Phe-24, 24-Phe-|-Phe-25 and 25-Phe-|-Tyr-26 bonds in the B chain of insulin.. In terms of biological role, shows particularly broad specificity; although bonds involving phenylalanine and leucine are preferred, many others are also cleaved to some extent. The protein is Pepsin A-2/A-3 of Macaca fuscata fuscata (Japanese macaque).